Here is a 332-residue protein sequence, read N- to C-terminus: MPPTVDMGIPGASSSVAVNPTRKRVLLAEPRGYCAGVDRAVETVERALEKHGPPVYVRHEIVHNRHVVSTLEKAGAVFVEETDEVPEGAIVVFSAHGVAPTVHAAAAERNLHTIDATCPLVTKVHNEARRFARNDYDILLIGHEGHEEVVGTAGEAPDHVQLVDGVAAVDNVRVRDEDKVVWLSQTTLSVDETMEIVERLRQRFPKLQDPPSDDICYATQNRQVAVKAMAPECDLVIVVGSRNSSNSVRLVEVALGGGAGAAHLVDWADDIDPAWLEGVTTVGVTSGASVPEVLVQGVLERLAECGFDVVQPVTTAQETLVFALPREIRSAR.

Residue Cys34 participates in [4Fe-4S] cluster binding. Residues His63 and His96 each coordinate (2E)-4-hydroxy-3-methylbut-2-enyl diphosphate. 2 residues coordinate dimethylallyl diphosphate: His63 and His96. Isopentenyl diphosphate-binding residues include His63 and His96. Cys118 serves as a coordination point for [4Fe-4S] cluster. Residue His146 coordinates (2E)-4-hydroxy-3-methylbut-2-enyl diphosphate. His146 serves as a coordination point for dimethylallyl diphosphate. Isopentenyl diphosphate is bound at residue His146. Catalysis depends on Glu148, which acts as the Proton donor. Thr186 is a (2E)-4-hydroxy-3-methylbut-2-enyl diphosphate binding site. Cys216 is a binding site for [4Fe-4S] cluster. (2E)-4-hydroxy-3-methylbut-2-enyl diphosphate-binding residues include Ser244, Ser245, Asn246, and Ser289. Dimethylallyl diphosphate is bound by residues Ser244, Ser245, Asn246, and Ser289. Ser244, Ser245, Asn246, and Ser289 together coordinate isopentenyl diphosphate.

The protein belongs to the IspH family. The cofactor is [4Fe-4S] cluster.

The enzyme catalyses isopentenyl diphosphate + 2 oxidized [2Fe-2S]-[ferredoxin] + H2O = (2E)-4-hydroxy-3-methylbut-2-enyl diphosphate + 2 reduced [2Fe-2S]-[ferredoxin] + 2 H(+). The catalysed reaction is dimethylallyl diphosphate + 2 oxidized [2Fe-2S]-[ferredoxin] + H2O = (2E)-4-hydroxy-3-methylbut-2-enyl diphosphate + 2 reduced [2Fe-2S]-[ferredoxin] + 2 H(+). Its pathway is isoprenoid biosynthesis; dimethylallyl diphosphate biosynthesis; dimethylallyl diphosphate from (2E)-4-hydroxy-3-methylbutenyl diphosphate: step 1/1. It functions in the pathway isoprenoid biosynthesis; isopentenyl diphosphate biosynthesis via DXP pathway; isopentenyl diphosphate from 1-deoxy-D-xylulose 5-phosphate: step 6/6. Functionally, catalyzes the conversion of 1-hydroxy-2-methyl-2-(E)-butenyl 4-diphosphate (HMBPP) into a mixture of isopentenyl diphosphate (IPP) and dimethylallyl diphosphate (DMAPP). Acts in the terminal step of the DOXP/MEP pathway for isoprenoid precursor biosynthesis. The protein is 4-hydroxy-3-methylbut-2-enyl diphosphate reductase of Mycolicibacterium paratuberculosis (strain ATCC BAA-968 / K-10) (Mycobacterium paratuberculosis).